The primary structure comprises 64 residues: H/ACA ribonucleoprotein complex subunit 3-like protein (64 aa).

This sequence belongs to the NOP10 family. As to quaternary structure, component of the small nucleolar ribonucleoprotein particles containing H/ACA-type snoRNAs (H/ACA snoRNPs).

The protein localises to the nucleus. It localises to the nucleolus. Its function is as follows. Required for ribosome biogenesis. Part of a complex which catalyzes pseudouridylation of rRNA. This involves the isomerization of uridine such that the ribose is subsequently attached to C5, instead of the normal N1. Pseudouridine ('psi') residues may serve to stabilize the conformation of rRNAs. This chain is H/ACA ribonucleoprotein complex subunit 3-like protein, found in Arabidopsis thaliana (Mouse-ear cress).